The following is a 99-amino-acid chain: Ribonuclease P protein component 1 (99 aa).

This sequence belongs to the eukaryotic/archaeal RNase P protein component 1 family. As to quaternary structure, consists of a catalytic RNA component and at least 4-5 protein subunits.

Its subcellular location is the cytoplasm. The catalysed reaction is Endonucleolytic cleavage of RNA, removing 5'-extranucleotides from tRNA precursor.. Its function is as follows. Part of ribonuclease P, a protein complex that generates mature tRNA molecules by cleaving their 5'-ends. The protein is Ribonuclease P protein component 1 of Methanococcus vannielii.